A 1111-amino-acid polypeptide reads, in one-letter code: Receptor-type guanylate cyclase gcy-7 (1111 aa).

An N-terminal signal peptide occupies residues 1–24 (MKPFYSMSLVLFLVITLLPKPMFP). Residues 25-488 (QVATGTTGNV…CPKSFVDEYL (464 aa)) are Extracellular-facing. N-linked (GlcNAc...) asparagine glycosylation is found at N80, N300, N326, N353, N389, N407, N430, and N441. Residues 489-509 (IWVIVAIVVLFLAITAAACGI) traverse the membrane as a helical segment. The Cytoplasmic portion of the chain corresponds to 510-1111 (YFSIQARRQE…TLKSDEQLSD (602 aa)). Residues 536–838 (QINSKQKGKG…NDNLMDHVFN (303 aa)) enclose the Protein kinase domain. Residues 542-550 (KGKGEHSVR) and K568 contribute to the ATP site. The 131-residue stretch at 896-1026 (TIFFSDVVQF…DAVNTASRME (131 aa)) folds into the Guanylate cyclase domain.

This sequence belongs to the adenylyl cyclase class-4/guanylyl cyclase family. Expressed asymmetrically in ASE left (ASEL) sensory neuron. Expressed in excretory canal cell.

The protein localises to the cell membrane. It catalyses the reaction GTP = 3',5'-cyclic GMP + diphosphate. Functionally, guanylate cyclase involved in the production of the second messenger cGMP. Unlike other guanylate cyclases expressed in ASE neurons, may not play a role in chemotaxis responses toward salt ions in ASEL (ASE left) sensory neurons. This is Receptor-type guanylate cyclase gcy-7 from Caenorhabditis elegans.